A 561-amino-acid polypeptide reads, in one-letter code: MMETQFPWLTTIVLLPLLAALLIPFIPDQNGKTMRWYGLGVGAIDFALMCYVFWKYYNASDSGFQLVEKYLWLPQIGLSWAVSVDGLSMPLVLLAGLVTTLSIFAAWQVDYKPRLFYFLMLVLYSAQIGVFVAQDLMLLFIMWELELVPVYLLISIWGGKKRRYAATKFLLYTAAASIFILVAALGMALYGEGNTTFDMVELGLKDYPLAFELLLYLGLLITFGVKLAVFPLHTWLPDAHGEASAPVSMILAGVLLKMGGYGLIRLNLEMLSDAHVYFAPVLAILGVVNIVYGGLNSFGQSNMKRRLAYSSVAHMGFVLLGIASFTDLGISGALLQMISHGLIAAVLFFLAGVTYDRLHTLALDEMGGLGQVMPKIFALFTISAMASLALPGMSGFASELMVFVGVTSSDIYSSTFCTVTVFLAAVGLILTPIYLLSMLRQMFYSTGKAPVCLLKNTPYENEVLDEAICFGTNCVLPAKAVYTDAKPREVAIAACFLVLIIGIGLYPKIATRMYDAKIVAVNTQVRQSYTFAKADPQLFAKGFLFPRIPESEVLSVSGLLR.

Transmembrane regions (helical) follow at residues 6–26 (FPWL…IPFI), 36–56 (WYGL…FWKY), 87–107 (LSMP…FAAW), 115–135 (LFYF…VAQD), 136–156 (LMLL…LISI), 169–189 (FLLY…GMAL), 210–230 (AFEL…LAVF), 244–264 (SAPV…YGLI), 275–295 (HVYF…YGGL), 312–332 (VAHM…GISG), 333–353 (ALLQ…LAGV), 376–396 (IFAL…MSGF), 419–439 (VTVF…LSML), and 490–510 (VAIA…PKIA).

Belongs to the complex I subunit 4 family.

Its subcellular location is the cellular thylakoid membrane. It catalyses the reaction a plastoquinone + NADH + (n+1) H(+)(in) = a plastoquinol + NAD(+) + n H(+)(out). The catalysed reaction is a plastoquinone + NADPH + (n+1) H(+)(in) = a plastoquinol + NADP(+) + n H(+)(out). NDH-1 shuttles electrons from NAD(P)H, via FMN and iron-sulfur (Fe-S) centers, to quinones in the respiratory chain. The immediate electron acceptor for the enzyme in this species is believed to be plastoquinone. Couples the redox reaction to proton translocation (for every two electrons transferred, four hydrogen ions are translocated across the cytoplasmic membrane), and thus conserves the redox energy in a proton gradient. The protein is NAD(P)H-quinone oxidoreductase chain 4 2 of Trichodesmium erythraeum (strain IMS101).